The sequence spans 360 residues: NAD(P)H-quinone oxidoreductase subunit 1, chloroplastic (360 aa).

8 helical membrane-spanning segments follow: residues 30–50 (FLPI…LVWL), 98–118 (FSIG…VIPF), 127–147 (FNIG…GLLM), 165–185 (AAQS…ISLL), 203–223 (FWGW…ISSL), 253–273 (FGLF…FVTV), 297–317 (IFGT…FLFI), and 340–360 (FLLP…VFSL).

Belongs to the complex I subunit 1 family. As to quaternary structure, NDH is composed of at least 16 different subunits, 5 of which are encoded in the nucleus.

Its subcellular location is the plastid. It localises to the chloroplast thylakoid membrane. It catalyses the reaction a plastoquinone + NADH + (n+1) H(+)(in) = a plastoquinol + NAD(+) + n H(+)(out). The catalysed reaction is a plastoquinone + NADPH + (n+1) H(+)(in) = a plastoquinol + NADP(+) + n H(+)(out). Its function is as follows. NDH shuttles electrons from NAD(P)H:plastoquinone, via FMN and iron-sulfur (Fe-S) centers, to quinones in the photosynthetic chain and possibly in a chloroplast respiratory chain. The immediate electron acceptor for the enzyme in this species is believed to be plastoquinone. Couples the redox reaction to proton translocation, and thus conserves the redox energy in a proton gradient. The polypeptide is NAD(P)H-quinone oxidoreductase subunit 1, chloroplastic (Aethionema cordifolium (Lebanon stonecress)).